Here is a 360-residue protein sequence, read N- to C-terminus: Peptide chain release factor 1 (360 aa).

Position 237 is an N5-methylglutamine (Q237).

Belongs to the prokaryotic/mitochondrial release factor family. Methylated by PrmC. Methylation increases the termination efficiency of RF1.

The protein localises to the cytoplasm. Functionally, peptide chain release factor 1 directs the termination of translation in response to the peptide chain termination codons UAG and UAA. This Teredinibacter turnerae (strain ATCC 39867 / T7901) protein is Peptide chain release factor 1.